The chain runs to 229 residues: Potassium/proton antiporter CemA (229 aa).

Transmembrane regions (helical) follow at residues 114–134 (IIYF…LIIL) and 189–209 (IISG…KYWI).

Belongs to the CemA family.

The protein localises to the plastid. The protein resides in the chloroplast inner membrane. It carries out the reaction K(+)(in) + H(+)(out) = K(+)(out) + H(+)(in). Its function is as follows. Contributes to K(+)/H(+) antiport activity by supporting proton efflux to control proton extrusion and homeostasis in chloroplasts in a light-dependent manner to modulate photosynthesis. Prevents excessive induction of non-photochemical quenching (NPQ) under continuous-light conditions. Indirectly promotes efficient inorganic carbon uptake into chloroplasts. The chain is Potassium/proton antiporter CemA from Lotus japonicus (Lotus corniculatus var. japonicus).